The following is a 91-amino-acid chain: Small ribosomal subunit protein uS19 (91 aa).

Belongs to the universal ribosomal protein uS19 family.

In terms of biological role, protein S19 forms a complex with S13 that binds strongly to the 16S ribosomal RNA. The sequence is that of Small ribosomal subunit protein uS19 from Methylobacillus flagellatus (strain ATCC 51484 / DSM 6875 / VKM B-1610 / KT).